Consider the following 196-residue polypeptide: CASP-like protein 2A2 (196 aa).

Residues 1–26 (MAQGKESVSVVEMEGSGNGPAVEMRH) lie on the Cytoplasmic side of the membrane. The chain crosses the membrane as a helical span at residues 27–47 (FETLFRLLPVGLCISALVLML). The Extracellular portion of the chain corresponds to 48 to 68 (KSEQSDQYMQLDYSNVDAFRC). Residues 69 to 89 (LAYANGICAGYSLISAFDSMV) traverse the membrane as a helical segment. The Cytoplasmic segment spans residues 90 to 98 (PVSHHISRS). The helical transmembrane segment at 99 to 119 (WILFLLDQGITYLMLAGGAVA) threads the bilayer. The Extracellular portion of the chain corresponds to 120–148 (TQVLYVAYKGDEKATWEQICGSYGRFCNR). The chain crosses the membrane as a helical span at residues 149 to 169 (AGASVIISFFALVCFLLLSLL). The Cytoplasmic segment spans residues 170–196 (SAYRLFSKYDPPIHGGAKLEDQTTAQI).

This sequence belongs to the Casparian strip membrane proteins (CASP) family. As to quaternary structure, homodimer and heterodimers.

The protein resides in the cell membrane. This chain is CASP-like protein 2A2, found in Picea sitchensis (Sitka spruce).